The primary structure comprises 361 residues: 5-formaminoimidazole-4-carboxamide-1-(beta)-D-ribofuranosyl 5'-monophosphate synthetase (361 aa).

2 residues coordinate 5-amino-1-(5-phospho-beta-D-ribosyl)imidazole-4-carboxamide: His-27 and Ser-94. The ATP-grasp domain maps to 116 to 348 (RAILRWEAER…MGQRIAKEIK (233 aa)). Residues 146 to 208 (PDEI…ANYC) and Glu-230 each bind ATP. 5-amino-1-(5-phospho-beta-D-ribosyl)imidazole-4-carboxamide is bound at residue Asn-258. Mg(2+) contacts are provided by Gln-297 and Glu-310.

The protein belongs to the phosphohexose mutase family. The cofactor is Mg(2+). Requires Mn(2+) as cofactor.

The catalysed reaction is 5-amino-1-(5-phospho-beta-D-ribosyl)imidazole-4-carboxamide + formate + ATP = 5-formamido-1-(5-phospho-D-ribosyl)imidazole-4-carboxamide + ADP + phosphate. It functions in the pathway purine metabolism; IMP biosynthesis via de novo pathway; 5-formamido-1-(5-phospho-D-ribosyl)imidazole-4-carboxamide from 5-amino-1-(5-phospho-D-ribosyl)imidazole-4-carboxamide (formate route): step 1/1. Functionally, catalyzes the ATP- and formate-dependent formylation of 5-aminoimidazole-4-carboxamide-1-beta-d-ribofuranosyl 5'-monophosphate (AICAR) to 5-formaminoimidazole-4-carboxamide-1-beta-d-ribofuranosyl 5'-monophosphate (FAICAR) in the absence of folates. The polypeptide is 5-formaminoimidazole-4-carboxamide-1-(beta)-D-ribofuranosyl 5'-monophosphate synthetase (Methanococcus maripaludis (strain DSM 14266 / JCM 13030 / NBRC 101832 / S2 / LL)).